Consider the following 296-residue polypeptide: N-acetylmuramic acid 6-phosphate etherase (296 aa).

The 164-residue stretch at 54–217 folds into the SIS domain; the sequence is VIASFQQGGR…STTAMVGIGK (164 aa). Glu-82 serves as the catalytic Proton donor. The active site involves Glu-113.

It belongs to the GCKR-like family. MurNAc-6-P etherase subfamily. Homodimer.

The enzyme catalyses N-acetyl-D-muramate 6-phosphate + H2O = N-acetyl-D-glucosamine 6-phosphate + (R)-lactate. The protein operates within amino-sugar metabolism; N-acetylmuramate degradation. Its function is as follows. Specifically catalyzes the cleavage of the D-lactyl ether substituent of MurNAc 6-phosphate, producing GlcNAc 6-phosphate and D-lactate. The chain is N-acetylmuramic acid 6-phosphate etherase from Shouchella clausii (strain KSM-K16) (Alkalihalobacillus clausii).